Here is a 340-residue protein sequence, read N- to C-terminus: MTTYKDAGVDVEAGYEAVRLMRNDVKRTFRPEVLTDIGGFGGLFGLNKDKYSEPVLVSGTDGVGTKLKIAFLLDKHDTVGIDCVAMCVNDIVCSGAEPLFFLDYIALGKNRPEKVAQIVKGIADGCVEAGCALIGGETAEMPGFYPEDEYDLAGFAVGIVEKSKIIDGSKIKAGDKLIGLASSGIHSNGYSLVRKILAPTAKKLAEEIKMLGTTLGEELIKPTRLYVKTILDLKEKFEIKGIAHITGGGFIENIPRMLPQGLGVKVVRGSWPVLPIFTLLKDLGNLDEMDMYNTFNMGIGMTIAVDAEIANSVVEYLNKDKEQAYIIGEVVSDKEGLEIC.

It belongs to the AIR synthase family.

It localises to the cytoplasm. The enzyme catalyses 2-formamido-N(1)-(5-O-phospho-beta-D-ribosyl)acetamidine + ATP = 5-amino-1-(5-phospho-beta-D-ribosyl)imidazole + ADP + phosphate + H(+). It functions in the pathway purine metabolism; IMP biosynthesis via de novo pathway; 5-amino-1-(5-phospho-D-ribosyl)imidazole from N(2)-formyl-N(1)-(5-phospho-D-ribosyl)glycinamide: step 2/2. This Acetivibrio thermocellus (strain ATCC 27405 / DSM 1237 / JCM 9322 / NBRC 103400 / NCIMB 10682 / NRRL B-4536 / VPI 7372) (Clostridium thermocellum) protein is Phosphoribosylformylglycinamidine cyclo-ligase.